Here is a 177-residue protein sequence, read N- to C-terminus: Large ribosomal subunit protein uL6 (177 aa).

This sequence belongs to the universal ribosomal protein uL6 family. In terms of assembly, part of the 50S ribosomal subunit.

In terms of biological role, this protein binds to the 23S rRNA, and is important in its secondary structure. It is located near the subunit interface in the base of the L7/L12 stalk, and near the tRNA binding site of the peptidyltransferase center. The sequence is that of Large ribosomal subunit protein uL6 from Haemophilus ducreyi (strain 35000HP / ATCC 700724).